Consider the following 244-residue polypeptide: tRNA (guanine-N(7)-)-methyltransferase (244 aa).

S-adenosyl-L-methionine is bound by residues glutamate 42, aspartate 67, aspartate 94, and aspartate 116. Aspartate 116 is an active-site residue. Residues lysine 120, aspartate 150, and 191–194 each bind substrate; that span reads TYYE.

This sequence belongs to the class I-like SAM-binding methyltransferase superfamily. TrmB family.

It carries out the reaction guanosine(46) in tRNA + S-adenosyl-L-methionine = N(7)-methylguanosine(46) in tRNA + S-adenosyl-L-homocysteine. Its pathway is tRNA modification; N(7)-methylguanine-tRNA biosynthesis. In terms of biological role, catalyzes the formation of N(7)-methylguanine at position 46 (m7G46) in tRNA. The chain is tRNA (guanine-N(7)-)-methyltransferase from Porphyromonas gingivalis (strain ATCC BAA-308 / W83).